Consider the following 334-residue polypeptide: Meso-diaminopimelate D-dehydrogenase (334 aa).

NADP(+) contacts are provided by residues tyrosine 16 to leucine 19, threonine 40 to arginine 42, cysteine 75 to serine 78, glycine 98 to aspartate 100, and cysteine 127 to proline 131. Residues aspartate 100, aspartate 130, tryptophan 154, glutamine 160–glycine 161, threonine 179, arginine 205, histidine 255, and asparagine 284 each bind substrate.

The protein belongs to the diaminopimelate dehydrogenase family. In terms of assembly, homodimer.

It carries out the reaction meso-2,6-diaminopimelate + NADP(+) + H2O = (S)-2-amino-6-oxoheptanedioate + NH4(+) + NADPH + H(+). It participates in amino-acid biosynthesis; L-lysine biosynthesis via DAP pathway; DL-2,6-diaminopimelate from (S)-tetrahydrodipicolinate: step 1/1. In terms of biological role, catalyzes the reversible NADPH-dependent reductive amination of L-2-amino-6-oxopimelate, the acyclic form of L-tetrahydrodipicolinate, to generate the meso compound, D,L-2,6-diaminopimelate. Probably plays a role in lysine biosynthesis. Exhibits a high substrate specificity for meso-2,6-diaminopimelate (m-DAP), since the activity with L,L-2,6-diaminopimelate is less than 5% of the activity observed with m-DAP. Can use NAD(+) only very poorly since the activity observed in the presence of NAD(+) is about 0.3% of that with NADP(+). The chain is Meso-diaminopimelate D-dehydrogenase (ddh) from Acetivibrio thermocellus (strain ATCC 27405 / DSM 1237 / JCM 9322 / NBRC 103400 / NCIMB 10682 / NRRL B-4536 / VPI 7372) (Clostridium thermocellum).